Here is a 784-residue protein sequence, read N- to C-terminus: Lon protease (784 aa).

Positions 11-204 (IPVLPLRDVV…YLMAMMESEI (194 aa)) constitute a Lon N-terminal domain. Residue 356 to 363 (GPPGVGKT) coordinates ATP. The 182-residue stretch at 592-773 (ENRVGQVTGL…EEVLALALQN (182 aa)) folds into the Lon proteolytic domain. Residues serine 679 and lysine 722 contribute to the active site.

Belongs to the peptidase S16 family. In terms of assembly, homohexamer. Organized in a ring with a central cavity.

It is found in the cytoplasm. It carries out the reaction Hydrolysis of proteins in presence of ATP.. Functionally, ATP-dependent serine protease that mediates the selective degradation of mutant and abnormal proteins as well as certain short-lived regulatory proteins. Required for cellular homeostasis and for survival from DNA damage and developmental changes induced by stress. Degrades polypeptides processively to yield small peptide fragments that are 5 to 10 amino acids long. Binds to DNA in a double-stranded, site-specific manner. The sequence is that of Lon protease from Erwinia amylovora (Fire blight bacteria).